The following is a 271-amino-acid chain: Short-chain type dehydrogenase/reductase (271 aa).

NAD(+) is bound at residue 25–49; it reads IVTGASRGIGREIALNMAEKGAKVV. Ser-166 contributes to the substrate binding site. The active-site Proton acceptor is the Tyr-179.

It belongs to the short-chain dehydrogenases/reductases (SDR) family.

The polypeptide is Short-chain type dehydrogenase/reductase (Picea abies (Norway spruce)).